The primary structure comprises 707 residues: Choline transporter-like protein 4 (707 aa).

Topologically, residues 1–32 are cytoplasmic; the sequence is MGKKQKENEAYGNSAKYDPSFRGPIKNRGCTD. The chain crosses the membrane as a helical span at residues 33-53; it reads IICCVLFLVFILGYIVVGLVA. At 54–227 the chain is on the extracellular side; it reads WVYGDPRQVL…KIFEDFAQSW (174 aa). N-linked (GlcNAc...) asparagine glycans are attached at residues asparagine 67, asparagine 185, asparagine 195, and asparagine 196. A helical transmembrane segment spans residues 228–248; sequence YWILVALGVALVLSLLFILLL. The Cytoplasmic portion of the chain corresponds to 249 to 250; sequence RL. The chain crosses the membrane as a helical span at residues 251–271; the sequence is VAAPLVLLLIVGVLAVLAYGI. Residues 272–307 are Extracellular-facing; the sequence is YHCWQQYRELRDQGVSITQLGFTANLSAYQNVKETW. The N-linked (GlcNAc...) asparagine glycan is linked to asparagine 296. Residues 308–328 form a helical membrane-spanning segment; that stretch reads LAALIILAVLEGVLLLMLIFL. The Cytoplasmic portion of the chain corresponds to 329–356; the sequence is RQRIRIAIALLKEASRAVGQMMSTMFYP. A helical membrane pass occupies residues 357-377; that stretch reads LVTFVLLVICIGYWAVTALYL. Residues 378-452 are Extracellular-facing; sequence ATSGQPQYVY…GILGLFWTVN (75 aa). Asparagine 391, asparagine 403, and asparagine 413 each carry an N-linked (GlcNAc...) asparagine glycan. A helical membrane pass occupies residues 453 to 473; sequence WVLALGQCVLAGAFASFYWAF. Residues 474 to 498 are Cytoplasmic-facing; that stretch reads HKPRDIPTFPLSSAFIRTLRYHTGS. Residues 499-519 form a helical membrane-spanning segment; that stretch reads LAFGALILTLVQIARVILEYI. The Extracellular portion of the chain corresponds to 520–557; the sequence is DHKLRGSQNPVARCIICCFKCCLWCLEKFIKFLNRNAY. A helical transmembrane segment spans residues 558 to 578; the sequence is IMIAIYGKNFCVSAKNAFMLL. The Cytoplasmic segment spans residues 579 to 594; sequence MRNVVRVVVLDKVTDL. A helical membrane pass occupies residues 595-615; the sequence is LLFFGKLLVVGGVGVLSFFFF. Topologically, residues 616–635 are extracellular; that stretch reads SGRIKGLGKDFKNPDLNYYW. A helical transmembrane segment spans residues 636-656; it reads LPIMTSIMGAYVIASGFFSVF. The Cytoplasmic segment spans residues 657–707; the sequence is GMCVDTLFLCFLEDLERNDGSQERPYYMPKALLKILGKKNEVPTGGKNRKK.

It belongs to the CTL (choline transporter-like) family. In terms of processing, N-glycosylated; N-glycosylation of Asn-67 and Asn-391 is required for a proper thiamine pyrophosphate uptake. Highly expressed in intestine, kidney and stomach. Also expressed in testis and lung.

It localises to the membrane. Its subcellular location is the apical cell membrane. The catalysed reaction is choline(out) + n H(+)(in) = choline(in) + n H(+)(out). It carries out the reaction thiamine diphosphate(out) = thiamine diphosphate(in). Functionally, choline transporter that plays a role in the choline-acetylcholine system and is required to the efferent innervation of hair cells in the olivocochlear bundle for the maintenance of physiological function of outer hair cells and the protection of hair cells from acoustic injury. Also described as a thiamine pyrophosphate transporter in colon, may mediate the absorption of microbiota-generated thiamine pyrophosphate and contribute to host thiamine (vitamin B1) homeostasis. The sequence is that of Choline transporter-like protein 4 from Rattus norvegicus (Rat).